The sequence spans 633 residues: Chaperone protein DnaK (633 aa).

Threonine 198 bears the Phosphothreonine; by autocatalysis mark.

Belongs to the heat shock protein 70 family.

In terms of biological role, acts as a chaperone. This Rhodopseudomonas palustris (strain BisA53) protein is Chaperone protein DnaK.